A 291-amino-acid polypeptide reads, in one-letter code: Verruculogen synthase (291 aa).

Residue Y68 is part of the active site.

This sequence belongs to the PhyH family. In terms of assembly, homodimer. Fe cation is required as a cofactor.

The catalysed reaction is fumitremorgin B + 2-oxoglutarate + AH2 + 2 O2 = verruculogen + succinate + A + CO2 + H2O. It functions in the pathway mycotoxin biosynthesis. Its function is as follows. Verruculogen synthase; part of the gene cluster that mediates the biosynthesis of fumitremorgins, indole alkaloids that carry not only intriguing chemical structures, but also interesting biological and pharmacological activities. The biosynthesis of fumitremorgin-type alkaloids begins by condensation of the two amino acids L-tryptophan and L-proline to brevianamide F, catalyzed by the non-ribosomal peptide synthetase ftmA. Brevianamide F is then prenylated by the prenyltransferase ftmPT1/ftmB in the presence of dimethylallyl diphosphate, resulting in the formation of tryprostatin B. The three cytochrome P450 monooxygenases, ftmP450-1/ftmC, ftmP450-2/ftmE and ftmP450-3/FtmG, are responsible for the conversion of tryprostatin B to 6-hydroxytryprostatin B, tryprostatin A to fumitremorgin C and fumitremorgin C to 12,13-dihydroxyfumitremorgin C, respectively. The putative methyltransferase ftmMT/ftmD is expected for the conversion of 6-hydroxytryprostatin B to tryprostatin A. FtmPT2/FtmH catalyzes the prenylation of 12,13-dihydroxyfumitre-morgin C in the presence of dimethylallyl diphosphate, resulting in the formation of fumitremorgin B. Fumitremorgin B is further converted to verruculogen by ftmOx1/ftmF via the insertion of an endoperoxide bond between the two prenyl moieties. In some fungal species, verruculogen is further converted to fumitremorgin A, but the enzymes involved in this step have not been identified yet. The protein is Verruculogen synthase of Aspergillus fumigatus (Neosartorya fumigata).